Reading from the N-terminus, the 1145-residue chain is DNA-directed RNA polymerase subunit beta (1145 aa).

Over residues 1101–1112 (LPEERRVSSSKE) the composition is skewed to basic and acidic residues. Residues 1101 to 1145 (LPEERRVSSSKEEIEEEEEVEDNSDEFDETFLEEAEDDFSLDDED) are disordered. Residues 1113 to 1145 (EIEEEEEVEDNSDEFDETFLEEAEDDFSLDDED) show a composition bias toward acidic residues.

The protein belongs to the RNA polymerase beta chain family. As to quaternary structure, the RNAP catalytic core consists of 2 alpha, 1 beta, 1 beta' and 1 omega subunit. When a sigma factor is associated with the core the holoenzyme is formed, which can initiate transcription.

The catalysed reaction is RNA(n) + a ribonucleoside 5'-triphosphate = RNA(n+1) + diphosphate. DNA-dependent RNA polymerase catalyzes the transcription of DNA into RNA using the four ribonucleoside triphosphates as substrates. This Desulforamulus reducens (strain ATCC BAA-1160 / DSM 100696 / MI-1) (Desulfotomaculum reducens) protein is DNA-directed RNA polymerase subunit beta.